A 306-amino-acid polypeptide reads, in one-letter code: Beta-lactamase 1 (306 aa).

A signal peptide spans 1–43 (MKNKRMLKIGMCVGILGLSVTSLEAFTGGALQVEAKEKTGQVK). Ser89 functions as the Acyl-ester intermediate in the catalytic mechanism. The Proton acceptor role is filled by Glu185. 251 to 253 (KSG) provides a ligand contact to substrate.

Belongs to the class-A beta-lactamase family.

The enzyme catalyses a beta-lactam + H2O = a substituted beta-amino acid. In terms of biological role, this protein is a beta-lactamase with a substrate specificity for penicillins. This Bacillus mycoides protein is Beta-lactamase 1 (blaCI).